The chain runs to 104 residues: Class I hydrophobin 4 (104 aa).

A signal peptide spans 1–16; it reads MFASTVFVSLLAVAAA. 4 cysteine pairs are disulfide-bonded: Cys-26–Cys-85, Cys-34–Cys-79, Cys-35–Cys-61, and Cys-86–Cys-99.

It belongs to the fungal hydrophobin family. In terms of assembly, self-assembles to form functional amyloid fibrils called rodlets. Self-assembly into fibrillar rodlets occurs spontaneously at hydrophobic:hydrophilic interfaces and the rodlets further associate laterally to form amphipathic monolayers.

The protein localises to the secreted. Its subcellular location is the cell wall. Its function is as follows. Aerial growth, conidiation, and dispersal of filamentous fungi in the environment rely upon a capability of their secreting small amphipathic proteins called hydrophobins (HPBs) with low sequence identity. Class I can self-assemble into an outermost layer of rodlet bundles on aerial cell surfaces, conferring cellular hydrophobicity that supports fungal growth, development and dispersal; whereas Class II form highly ordered films at water-air interfaces through intermolecular interactions but contribute nothing to the rodlet structure. HYD4 is a class I hydrophobin that negatively regulates aerial mycelial growth, conidiation, carotenoid and adenosine synthesis, resistance to oxidant stress, and fruiting body development. Seems not to be involved in the mycelial growth rate, the hydrophobicity of the mycelia and conidia, nor the conidial virulence on silkworm pupae. The polypeptide is Class I hydrophobin 4 (Cordyceps militaris (Caterpillar fungus)).